The sequence spans 1601 residues: Ectopic P granules protein 5 (1601 aa).

The disordered stretch occupies residues 1-109 (MAELVRPKKP…EAPPIPARNL (109 aa)). Residues 15–26 (RPQSDDAPRIPD) are compositionally biased toward basic and acidic residues.

Belongs to the EPG5 family.

It is found in the cytoplasm. Involved in autophagy. Has a role in the degradation of protein aggregates within autophagosomes. Essential for starvation-induced autotrophy and omegasome development. This Caenorhabditis briggsae protein is Ectopic P granules protein 5 (epg-5).